A 466-amino-acid polypeptide reads, in one-letter code: Bifunctional protein GlmU (466 aa).

The interval 1–233 (MLHKSVLGLV…ADEAMGANDR (233 aa)) is pyrophosphorylase. UDP-N-acetyl-alpha-D-glucosamine contacts are provided by residues 11–14 (LAAG), Lys-25, Gln-79, and 84–85 (GT). Asp-108 is a Mg(2+) binding site. UDP-N-acetyl-alpha-D-glucosamine contacts are provided by Gly-143, Glu-158, Asn-173, and Asn-231. Position 231 (Asn-231) interacts with Mg(2+). A linker region spans residues 234 to 254 (AQLAALEAVYRQRKVQELFAQ). The segment at 255–466 (GVTLIDPNRI…QKKKEHKNDA (212 aa)) is N-acetyltransferase. UDP-N-acetyl-alpha-D-glucosamine is bound by residues Arg-337 and Lys-355. Residue His-367 is the Proton acceptor of the active site. Residues Tyr-370 and Asn-381 each coordinate UDP-N-acetyl-alpha-D-glucosamine. Acetyl-CoA is bound by residues Ala-384, 390–391 (NY), Ser-409, Ala-427, and Arg-444.

It in the N-terminal section; belongs to the N-acetylglucosamine-1-phosphate uridyltransferase family. This sequence in the C-terminal section; belongs to the transferase hexapeptide repeat family. Homotrimer. It depends on Mg(2+) as a cofactor.

It is found in the cytoplasm. The catalysed reaction is alpha-D-glucosamine 1-phosphate + acetyl-CoA = N-acetyl-alpha-D-glucosamine 1-phosphate + CoA + H(+). It carries out the reaction N-acetyl-alpha-D-glucosamine 1-phosphate + UTP + H(+) = UDP-N-acetyl-alpha-D-glucosamine + diphosphate. It functions in the pathway nucleotide-sugar biosynthesis; UDP-N-acetyl-alpha-D-glucosamine biosynthesis; N-acetyl-alpha-D-glucosamine 1-phosphate from alpha-D-glucosamine 6-phosphate (route II): step 2/2. Its pathway is nucleotide-sugar biosynthesis; UDP-N-acetyl-alpha-D-glucosamine biosynthesis; UDP-N-acetyl-alpha-D-glucosamine from N-acetyl-alpha-D-glucosamine 1-phosphate: step 1/1. The protein operates within bacterial outer membrane biogenesis; LPS lipid A biosynthesis. Functionally, catalyzes the last two sequential reactions in the de novo biosynthetic pathway for UDP-N-acetylglucosamine (UDP-GlcNAc). The C-terminal domain catalyzes the transfer of acetyl group from acetyl coenzyme A to glucosamine-1-phosphate (GlcN-1-P) to produce N-acetylglucosamine-1-phosphate (GlcNAc-1-P), which is converted into UDP-GlcNAc by the transfer of uridine 5-monophosphate (from uridine 5-triphosphate), a reaction catalyzed by the N-terminal domain. The protein is Bifunctional protein GlmU of Dichelobacter nodosus (strain VCS1703A).